A 262-amino-acid polypeptide reads, in one-letter code: Hydroxyethylthiazole kinase (262 aa).

Methionine 50 lines the substrate pocket. The ATP site is built by arginine 125 and threonine 171. A substrate-binding site is contributed by glycine 198.

The protein belongs to the Thz kinase family. It depends on Mg(2+) as a cofactor.

The catalysed reaction is 5-(2-hydroxyethyl)-4-methylthiazole + ATP = 4-methyl-5-(2-phosphooxyethyl)-thiazole + ADP + H(+). The protein operates within cofactor biosynthesis; thiamine diphosphate biosynthesis; 4-methyl-5-(2-phosphoethyl)-thiazole from 5-(2-hydroxyethyl)-4-methylthiazole: step 1/1. Its function is as follows. Catalyzes the phosphorylation of the hydroxyl group of 4-methyl-5-beta-hydroxyethylthiazole (THZ). The protein is Hydroxyethylthiazole kinase of Escherichia coli (strain K12 / MC4100 / BW2952).